The chain runs to 473 residues: Argininosuccinate lyase (473 aa).

It belongs to the lyase 1 family. Argininosuccinate lyase subfamily.

It localises to the cytoplasm. It carries out the reaction 2-(N(omega)-L-arginino)succinate = fumarate + L-arginine. Its pathway is amino-acid biosynthesis; L-arginine biosynthesis; L-arginine from L-ornithine and carbamoyl phosphate: step 3/3. The polypeptide is Argininosuccinate lyase (Bordetella pertussis (strain Tohama I / ATCC BAA-589 / NCTC 13251)).